Here is a 452-residue protein sequence, read N- to C-terminus: Chromosomal replication initiator protein DnaA (452 aa).

The domain I, interacts with DnaA modulators stretch occupies residues 1-80 (MSSTVSTLWR…NNDQFMVKIQ (80 aa)). Residues 80–114 (QDGIKPTEKTTTNVEQKTQNENCHNEITSQQNYRS) form a domain II region. A domain III, AAA+ region region spans residues 115–332 (YLNKNHVFDN…GALNRVHAHA (218 aa)). Gly-160, Gly-162, Lys-163, and Thr-164 together coordinate ATP. The domain IV, binds dsDNA stretch occupies residues 333–452 (EFTGKAITID…WSNLIRTLSV (120 aa)).

This sequence belongs to the DnaA family. As to quaternary structure, oligomerizes as a right-handed, spiral filament on DNA at oriC.

The protein localises to the cytoplasm. Its function is as follows. Plays an essential role in the initiation and regulation of chromosomal replication. ATP-DnaA binds to the origin of replication (oriC) to initiate formation of the DNA replication initiation complex once per cell cycle. Binds the DnaA box (a 9 base pair repeat at the origin) and separates the double-stranded (ds)DNA. Forms a right-handed helical filament on oriC DNA; dsDNA binds to the exterior of the filament while single-stranded (ss)DNA is stabiized in the filament's interior. The ATP-DnaA-oriC complex binds and stabilizes one strand of the AT-rich DNA unwinding element (DUE), permitting loading of DNA polymerase. After initiation quickly degrades to an ADP-DnaA complex that is not apt for DNA replication. Binds acidic phospholipids. The sequence is that of Chromosomal replication initiator protein DnaA from Histophilus somni (strain 129Pt) (Haemophilus somnus).